Consider the following 417-residue polypeptide: UDP-N-acetylmuramoylalanine--D-glutamate ligase (417 aa).

G101–S107 serves as a coordination point for ATP.

It belongs to the MurCDEF family.

It is found in the cytoplasm. The enzyme catalyses UDP-N-acetyl-alpha-D-muramoyl-L-alanine + D-glutamate + ATP = UDP-N-acetyl-alpha-D-muramoyl-L-alanyl-D-glutamate + ADP + phosphate + H(+). It functions in the pathway cell wall biogenesis; peptidoglycan biosynthesis. Cell wall formation. Catalyzes the addition of glutamate to the nucleotide precursor UDP-N-acetylmuramoyl-L-alanine (UMA). In Thermus thermophilus (strain ATCC BAA-163 / DSM 7039 / HB27), this protein is UDP-N-acetylmuramoylalanine--D-glutamate ligase.